A 360-amino-acid chain; its full sequence is Phospho-N-acetylmuramoyl-pentapeptide-transferase (360 aa).

10 helical membrane-spanning segments follow: residues 26-46 (AIMS…RLIA), 70-90 (GTPT…ALLW), 94-114 (SNPY…VGFV), 132-152 (WKYF…YMHG), 168-188 (VMPQ…VGTS), 199-219 (GLAI…AWAT), 239-259 (LVVL…FNTY), 263-283 (VFMG…IAVL), 288-308 (LLLV…ILQV), and 338-358 (VIVR…ATLK).

It belongs to the glycosyltransferase 4 family. MraY subfamily. Mg(2+) is required as a cofactor.

Its subcellular location is the cell inner membrane. It catalyses the reaction UDP-N-acetyl-alpha-D-muramoyl-L-alanyl-gamma-D-glutamyl-meso-2,6-diaminopimeloyl-D-alanyl-D-alanine + di-trans,octa-cis-undecaprenyl phosphate = di-trans,octa-cis-undecaprenyl diphospho-N-acetyl-alpha-D-muramoyl-L-alanyl-D-glutamyl-meso-2,6-diaminopimeloyl-D-alanyl-D-alanine + UMP. It functions in the pathway cell wall biogenesis; peptidoglycan biosynthesis. Catalyzes the initial step of the lipid cycle reactions in the biosynthesis of the cell wall peptidoglycan: transfers peptidoglycan precursor phospho-MurNAc-pentapeptide from UDP-MurNAc-pentapeptide onto the lipid carrier undecaprenyl phosphate, yielding undecaprenyl-pyrophosphoryl-MurNAc-pentapeptide, known as lipid I. In Photobacterium profundum (strain SS9), this protein is Phospho-N-acetylmuramoyl-pentapeptide-transferase.